We begin with the raw amino-acid sequence, 160 residues long: Endoribonuclease YbeY (160 aa).

3 residues coordinate Zn(2+): histidine 111, histidine 115, and histidine 121.

Belongs to the endoribonuclease YbeY family. The cofactor is Zn(2+).

The protein localises to the cytoplasm. Functionally, single strand-specific metallo-endoribonuclease involved in late-stage 70S ribosome quality control and in maturation of the 3' terminus of the 16S rRNA. This is Endoribonuclease YbeY from Stutzerimonas stutzeri (strain A1501) (Pseudomonas stutzeri).